A 419-amino-acid polypeptide reads, in one-letter code: Acyl transferase 9 (419 aa).

Catalysis depends on proton acceptor residues His-161 and Asp-362.

The protein belongs to the plant acyltransferase family.

Functionally, involved in the incorporation of ferulate into the cell wall. May act as arabinoxylan feruloyl transferase. The polypeptide is Acyl transferase 9 (Oryza sativa subsp. japonica (Rice)).